Consider the following 98-residue polypeptide: NADH-ubiquinone oxidoreductase chain 4L (98 aa).

Helical transmembrane passes span 1–21 (MPLI…GMLV), 29–49 (SLLC…LMTL), and 58–78 (IVPI…LALL).

It belongs to the complex I subunit 4L family. As to quaternary structure, core subunit of respiratory chain NADH dehydrogenase (Complex I) which is composed of 45 different subunits.

Its subcellular location is the mitochondrion inner membrane. The enzyme catalyses a ubiquinone + NADH + 5 H(+)(in) = a ubiquinol + NAD(+) + 4 H(+)(out). In terms of biological role, core subunit of the mitochondrial membrane respiratory chain NADH dehydrogenase (Complex I) which catalyzes electron transfer from NADH through the respiratory chain, using ubiquinone as an electron acceptor. Part of the enzyme membrane arm which is embedded in the lipid bilayer and involved in proton translocation. This Pan paniscus (Pygmy chimpanzee) protein is NADH-ubiquinone oxidoreductase chain 4L (MT-ND4L).